We begin with the raw amino-acid sequence, 751 residues long: Adhesive plaque matrix protein (751 aa).

The signal sequence occupies residues 1–20 (MEGIKLNLCLLCIFTCDILG). The segment at 21-41 (FSNGNIYNAHGSAYAGASAGA) is nonrepetitive linker. 55 repeat units span residues 109–118 (YKPKMTYPPT), 119–128 (YKPKPSYPPT), 129–138 (YKPKPSYPAT), 139–148 (YKSKSSYPSS), 149–158 (YKPKKTYPPT), 159–168 (YKPKLTYPPT), 169–178 (YKPKPSYPPT), 179–188 (YKPKPSYPAT), 189–198 (YKSKSSYPPS), 199–208 (YKTKKTYPSS), 209–218 (YKPKKTYPST), 219–228 (YKPKVSYPPT), 229–238 (YKSKKSYPPI), 239–248 (YKTKASYPSS), 249–258 (YKPKKTYPST), 259–268 (YKPKISYPPT), 269–278 (YKAKPSYPTS), 279–288 (YRAKPSYPST), 289–298 (YKAKPSYPPT), 299–308 (YKAKPSYPPT), 309–318 (YKAKPTYPST), 319–328 (YKAKPSYPPT), 329–338 (YKAKPSYPPT), 339–348 (YKAKPSYPPS), 349–358 (YKPKTTYPPS), 359–368 (YKPKISYPPT), 369–378 (YKAKPSYPPI), 379–388 (YKAKPSYPPT), 389–398 (YKAKPSYLPT), 399–408 (YKAKPSYPPT), 409–418 (YKAKPRYPTT), 419–428 (YKAKPSYPPT), 429–438 (YKAKPSYPPT), 439–448 (YKAKLSYPPT), 449–458 (YKAKPSYPPT), 459–468 (YKAKPSYPPT), 469–478 (YKAKPSYPPT), 479–488 (YKTKPSYPRT), 489–498 (YKAKPSYSST), 499–508 (YKAKPSYPPT), 509–518 (YKAKPSYPPT), 519–528 (YKAKPSYPPT), 529–538 (YKAKPSYPPT), 539–548 (YKAKPSYPPT), 549–558 (YKAKPSYPQT), 559–568 (YKAKSSYPPT), 569–578 (YKAKPSYPPT), 579–588 (YKAKPSYPPT), 589–598 (YKAKPSYPPT), 599–608 (YKAKPSYPPT), 609–618 (YKAKPSYPPT), 619–628 (YKAKPSYPPT), 629–638 (YKAKPSYPPT), 639–648 (YKAKPSYPPT), and 649–658 (YKAKPSYPAT). A 63 X 10 AA tandem repeats of Y-[KR]-[APTS]-K-[KPMSLTIVA]-[STR]-Y-[PLS]-[PASRQT]-[STI] region spans residues 109–732 (YKPKMTYPPT…YKPKPSYPPT (624 aa)). The span at 158-167 (TYKPKLTYPP) shows a compositional bias: low complexity. Positions 158 to 359 (TYKPKLTYPP…KPKTTYPPSY (202 aa)) are disordered. Pro residues predominate over residues 168–184 (TYKPKPSYPPTYKPKPS). The span at 185-262 (YPATYKSKSS…KTYPSTYKPK (78 aa)) shows a compositional bias: low complexity. Low complexity-rich tracts occupy residues 288–343 (TYKA…KAKP) and 350–359 (KPKTTYPPSY). The disordered stretch occupies residues 397 to 636 (PTYKAKPSYP…PTYKAKPSYP (240 aa)). Positions 444-486 (SYPPTYKAKPSYPPTYKAKPSYPPTYKAKPSYPPTYKTKPSYP) are enriched in low complexity. Residues 659 to 662 (YPST) form a 56; truncated repeat. Residues 660 to 751 (PSTYKAKPSY…KKKISYPSQY (92 aa)) are disordered. The segment covering 662–677 (TYKAKPSYPPTYKAKP) has biased composition (low complexity). 7 tandem repeats follow at residues 663-672 (YKAKPSYPPT), 673-682 (YKAKPSYPPT), 683-692 (YKPKPSYPPT), 693-702 (YKSKSSYPSS), 703-712 (YKPKKTYPPT), 713-722 (YKPKLTYPPI), and 723-732 (YKPKPSYPPT). Residues 678 to 690 (SYPPTYKPKPSYP) are compositionally biased toward pro residues. Positions 691–721 (PTYKSKSSYPSSYKPKKTYPPTYKPKLTYPP) are enriched in low complexity.

In terms of processing, hydroxylated on proline (mono- or dihydroxylation) and tyrosine residues (to L-DOPA = 3',4'-dihydroxyphenylalanine) of the tandem repeats. Produced by the byssal gland.

It is found in the secreted. Provides adhesiveness to the mussel's foot. Mussels produce one of the strongest water insoluble glues. The mussel's adhesive is a bundle of threads, called a byssus, formed by a fibrous collagenous core coated with adhesive proteins. This chain is Adhesive plaque matrix protein (FP1), found in Mytilus galloprovincialis (Mediterranean mussel).